We begin with the raw amino-acid sequence, 162 residues long: Ecotin (162 aa).

Residues 1 to 18 (MFVPAVVFAALASTSAWA) form the signal peptide. A disulfide bond links cysteine 70 and cysteine 107.

The protein belongs to the protease inhibitor I11 (ecotin) family. In terms of assembly, homodimer.

It is found in the periplasm. Its function is as follows. General inhibitor of pancreatic serine proteases: inhibits chymotrypsin, trypsin, elastases, factor X, kallikrein as well as a variety of other proteases. This is Ecotin from Salmonella choleraesuis (strain SC-B67).